The sequence spans 513 residues: Bifunctional purine biosynthesis protein PurH (513 aa).

The 145-residue stretch at 1–145 (MNKRAIISVY…KNFKYTTVIV (145 aa)) folds into the MGS-like domain.

This sequence belongs to the PurH family.

It carries out the reaction (6R)-10-formyltetrahydrofolate + 5-amino-1-(5-phospho-beta-D-ribosyl)imidazole-4-carboxamide = 5-formamido-1-(5-phospho-D-ribosyl)imidazole-4-carboxamide + (6S)-5,6,7,8-tetrahydrofolate. It catalyses the reaction IMP + H2O = 5-formamido-1-(5-phospho-D-ribosyl)imidazole-4-carboxamide. Its pathway is purine metabolism; IMP biosynthesis via de novo pathway; 5-formamido-1-(5-phospho-D-ribosyl)imidazole-4-carboxamide from 5-amino-1-(5-phospho-D-ribosyl)imidazole-4-carboxamide (10-formyl THF route): step 1/1. It participates in purine metabolism; IMP biosynthesis via de novo pathway; IMP from 5-formamido-1-(5-phospho-D-ribosyl)imidazole-4-carboxamide: step 1/1. The sequence is that of Bifunctional purine biosynthesis protein PurH from Caldicellulosiruptor bescii (strain ATCC BAA-1888 / DSM 6725 / KCTC 15123 / Z-1320) (Anaerocellum thermophilum).